Consider the following 332-residue polypeptide: MIEPNYLPFILIGGGIIFVVLFFHYVPFFLWLSAKVSGVRISLVQLFLMRIRNVPPYVIVPAMIEAHKAGLSNITRDELEAHYMAGGHVEKVVHALVSASKANIELSFQMATGIDLAGRDVFEAVQMSVNPKVIDTPPVTAVAKDGIQLIAKARVTVRANIRQLVGGAGEDTILARVGEGIVSSIGSSENHKSVLENPDSISKLVLRKGLDAGTAFEILSIDIADIDIGRNIGAALQIDQANADKNIAQAKAEERRAMAVALEQEMKAKAEEARANVIQAEAEVPKAMAEAFRSGNLGIMDYYRMKNIQADTSMRENIAKPETTFGNEPLSK.

A helical transmembrane segment spans residues 9–29 (FILIGGGIIFVVLFFHYVPFF).

Belongs to the flotillin-like FloA family. Homooligomerizes.

The protein resides in the cell membrane. It is found in the membrane raft. Found in functional membrane microdomains (FMM) that may be equivalent to eukaryotic membrane rafts. FMMs are highly dynamic and increase in number as cells age. Flotillins are thought to be important factors in membrane fluidity. The sequence is that of Flotillin-like protein FloA from Phocaeicola vulgatus (strain ATCC 8482 / DSM 1447 / JCM 5826 / CCUG 4940 / NBRC 14291 / NCTC 11154) (Bacteroides vulgatus).